Reading from the N-terminus, the 306-residue chain is MDAVHVRAPGKVNVFMRVGPLRHDGYHDVATAYQALSLYEDVRAYPADDISVTFAGGSVDTSALPTDGTNLAVKAAKLLAKRTGFTGGVRLEIDKRVPIAGGMGGGSADAAATLVACDALWGTELGREELLALAARLGADVPFALVGGTAIGTGRGDRLSPALATGQFHWVLAFAEGQLSTPTVYSELDRHRERHASEIPPAQRAPGVDAGVLQALRAGDAAMLAEVLSNDLQAPAIHLAPSIAEVLELGELNGALAGIVSGSGPTVAFLAADLDNALDVQIALSAARVRVVRATGPVHGARVLSD.

Residue Lys-11 is part of the active site. Residue 98-108 (PIAGGMGGGSA) participates in ATP binding. Asp-140 is an active-site residue.

Belongs to the GHMP kinase family. IspE subfamily.

It carries out the reaction 4-CDP-2-C-methyl-D-erythritol + ATP = 4-CDP-2-C-methyl-D-erythritol 2-phosphate + ADP + H(+). Its pathway is isoprenoid biosynthesis; isopentenyl diphosphate biosynthesis via DXP pathway; isopentenyl diphosphate from 1-deoxy-D-xylulose 5-phosphate: step 3/6. Functionally, catalyzes the phosphorylation of the position 2 hydroxy group of 4-diphosphocytidyl-2C-methyl-D-erythritol. The sequence is that of 4-diphosphocytidyl-2-C-methyl-D-erythritol kinase from Leifsonia xyli subsp. xyli (strain CTCB07).